The chain runs to 236 residues: MLSTLIRRLSRALLWFVAGSIVLVLVFRWVPPPGTALMVERKVQSWVNGEPIDLQRDWEPWENISDELKVAVIAGEDQKFASHWGFDLPAIQAALAHNERGGNIRGASTLTQQVAKNLFLWSGRSWFRKGLEAWFTALIELFWSKERILEVYLNSAEWGKGVFGAQAAARYHFGVDASRLSRQQAAQLAAVLPSPIKWSASRPSAYVASRAGWIRRQMSQLGGPSYLMQLDSSRKL.

The helical transmembrane segment at 12-31 (ALLWFVAGSIVLVLVFRWVP) threads the bilayer.

It belongs to the glycosyltransferase 51 family.

It is found in the cell inner membrane. The catalysed reaction is [GlcNAc-(1-&gt;4)-Mur2Ac(oyl-L-Ala-gamma-D-Glu-L-Lys-D-Ala-D-Ala)](n)-di-trans,octa-cis-undecaprenyl diphosphate + beta-D-GlcNAc-(1-&gt;4)-Mur2Ac(oyl-L-Ala-gamma-D-Glu-L-Lys-D-Ala-D-Ala)-di-trans,octa-cis-undecaprenyl diphosphate = [GlcNAc-(1-&gt;4)-Mur2Ac(oyl-L-Ala-gamma-D-Glu-L-Lys-D-Ala-D-Ala)](n+1)-di-trans,octa-cis-undecaprenyl diphosphate + di-trans,octa-cis-undecaprenyl diphosphate + H(+). It participates in cell wall biogenesis; peptidoglycan biosynthesis. Peptidoglycan polymerase that catalyzes glycan chain elongation from lipid-linked precursors. The polypeptide is Biosynthetic peptidoglycan transglycosylase (Pseudomonas putida (strain ATCC 47054 / DSM 6125 / CFBP 8728 / NCIMB 11950 / KT2440)).